A 370-amino-acid polypeptide reads, in one-letter code: Anhydro-N-acetylmuramic acid kinase (370 aa).

G13–D20 serves as a coordination point for ATP.

It belongs to the anhydro-N-acetylmuramic acid kinase family.

The catalysed reaction is 1,6-anhydro-N-acetyl-beta-muramate + ATP + H2O = N-acetyl-D-muramate 6-phosphate + ADP + H(+). Its pathway is amino-sugar metabolism; 1,6-anhydro-N-acetylmuramate degradation. It functions in the pathway cell wall biogenesis; peptidoglycan recycling. Catalyzes the specific phosphorylation of 1,6-anhydro-N-acetylmuramic acid (anhMurNAc) with the simultaneous cleavage of the 1,6-anhydro ring, generating MurNAc-6-P. Is required for the utilization of anhMurNAc either imported from the medium or derived from its own cell wall murein, and thus plays a role in cell wall recycling. The chain is Anhydro-N-acetylmuramic acid kinase from Vibrio cholerae serotype O1 (strain ATCC 39315 / El Tor Inaba N16961).